A 643-amino-acid chain; its full sequence is tRNA 5-methylaminomethyl-2-thiouridine biosynthesis bifunctional protein MnmC (643 aa).

A tRNA (mnm(5)s(2)U34)-methyltransferase region spans residues 1 to 223; the sequence is MPDRLVSATL…VDDRLVGDYA (223 aa). The interval 247-643 is FAD-dependent cmnm(5)s(2)U34 oxidoreductase; that stretch reads IGAGLAGCAV…LRARRVGSAG (397 aa).

This sequence in the N-terminal section; belongs to the methyltransferase superfamily. tRNA (mnm(5)s(2)U34)-methyltransferase family. It in the C-terminal section; belongs to the DAO family. FAD is required as a cofactor.

It localises to the cytoplasm. It catalyses the reaction 5-aminomethyl-2-thiouridine(34) in tRNA + S-adenosyl-L-methionine = 5-methylaminomethyl-2-thiouridine(34) in tRNA + S-adenosyl-L-homocysteine + H(+). Its function is as follows. Catalyzes the last two steps in the biosynthesis of 5-methylaminomethyl-2-thiouridine (mnm(5)s(2)U) at the wobble position (U34) in tRNA. Catalyzes the FAD-dependent demodification of cmnm(5)s(2)U34 to nm(5)s(2)U34, followed by the transfer of a methyl group from S-adenosyl-L-methionine to nm(5)s(2)U34, to form mnm(5)s(2)U34. This Burkholderia orbicola (strain AU 1054) protein is tRNA 5-methylaminomethyl-2-thiouridine biosynthesis bifunctional protein MnmC.